Here is a 484-residue protein sequence, read N- to C-terminus: uncharacterized protein (484 aa).

Residues 47–226 (TLPIPAAVVK…TEVTVKIFKF (180 aa)) form the FAD-binding PCMH-type domain.

This sequence belongs to the FAD-binding oxidoreductase/transferase type 4 family.

This is an uncharacterized protein from Escherichia coli (strain K12).